Consider the following 951-residue polypeptide: Leucine-rich repeat-containing G-protein coupled receptor 4 (951 aa).

The signal sequence occupies residues 1-24 (MPGPLRLLCFFALGLLGSAGPSGA). An LRRNT domain is found at 25–57 (APPLCAAPCSCDGDRRVDCSGKGLTAVPEGLSA). Residues 25–544 (APPLCAAPCS…LLGSWMIRLT (520 aa)) are Extracellular-facing. Intrachain disulfides connect cysteine 29/cysteine 35 and cysteine 33/cysteine 43. 15 LRR repeats span residues 58-79 (FTQA…AFKN), 82-103 (FLEE…ALSG), 106-127 (ELKV…AIRG), 130-151 (ALQS…SFEG), 154-177 (QLRH…SNLP), 178-199 (TLQA…AFTN), 202-223 (SLVV…CFDG), 226-247 (NLET…IKAL), 249-270 (SLKE…AFAG), 273-294 (LLRT…AFHN), 320-341 (HLES…LCQN), 344-365 (MLRT…NGCR), 366-387 (ALEE…TFQG), 390-411 (SLRI…AFAK), and 414-435 (TITN…GLNG). Residue asparagine 68 is glycosylated (N-linked (GlcNAc...) asparagine). N-linked (GlcNAc...) asparagine glycans are attached at residues asparagine 188 and asparagine 199. A glycan (N-linked (GlcNAc...) asparagine) is linked at asparagine 294. A disulfide bridge connects residues cysteine 339 and cysteine 364. Cystine bridges form between cysteine 470–cysteine 522 and cysteine 471–cysteine 476. The tract at residues 487–512 (NSPQDHSVTKEKGATDAANATSTAES) is disordered. Low complexity predominate over residues 501-510 (TDAANATSTA). Residue asparagine 505 is glycosylated (N-linked (GlcNAc...) asparagine). Residues 545–565 (VWFIFLVALLFNLLVILTVFA) traverse the membrane as a helical segment. Residues 566–575 (SCSSLPASKL) lie on the Cytoplasmic side of the membrane. The helical transmembrane segment at 576 to 596 (FIGLISVSNLLMGIYTGILTF) threads the bilayer. Topologically, residues 597–619 (LDAVSWGRFAEFGIWWETGSGCK) are extracellular. Cysteines 618 and 693 form a disulfide. Residues 620–640 (VAGSLAVFSSESAVFLLTLAA) traverse the membrane as a helical segment. At 641–661 (VERSVFAKDVMKNGKSSHLRQ) the chain is on the cytoplasmic side. Residues 662-682 (FQVAALVALLGAAIAGCFPLF) form a helical membrane-spanning segment. Topologically, residues 683–703 (HGGQYSASPLCLPFPTGETPS) are extracellular. The chain crosses the membrane as a helical span at residues 704–724 (LGFTVTLVLLNSLAFLLMAII). Residues 725–756 (YTKLYCNLEKEDPSENSQSSMIKHVAWLIFTN) lie on the Cytoplasmic side of the membrane. A helical transmembrane segment spans residues 757 to 777 (CIFFCPVAFFSFAPLITAISI). Topologically, residues 778–783 (SPEIMK) are extracellular. Residues 784–804 (SVTLIFFPLPACLNPVLYVFF) form a helical membrane-spanning segment. Residues 805–951 (NPKFKDDWKL…YAYNLPRVRD (147 aa)) lie on the Cytoplasmic side of the membrane. Serine 920 carries the post-translational modification Phosphoserine.

Belongs to the G-protein coupled receptor 1 family.

It is found in the cell membrane. Functionally, receptor for R-spondins that potentiates the canonical Wnt signaling pathway and is involved in the formation of various organs. Upon binding to R-spondins (RSPO1, RSPO2, RSPO3 or RSPO4), associates with phosphorylated LRP6 and frizzled receptors that are activated by extracellular Wnt receptors, triggering the canonical Wnt signaling pathway to increase expression of target genes. In contrast to classical G-protein coupled receptors, does not activate heterotrimeric G-proteins to transduce the signal. Its function as activator of the Wnt signaling pathway is required for the development of various organs, including liver, kidney, intestine, bone, reproductive tract and eye. May also act as a receptor for norrin (NDP), such results however require additional confirmation in vivo. Required during spermatogenesis to activate the Wnt signaling pathway in peritubular myoid cells. Required for the maintenance of intestinal stem cells and Paneth cell differentiation in postnatal intestinal crypts. Acts as a regulator of bone formation and remodeling. Involved in kidney development; required for maintaining the ureteric bud in an undifferentiated state. Involved in the development of the anterior segment of the eye. Required during erythropoiesis. Also acts as a negative regulator of innate immunity by inhibiting TLR2/TLR4 associated pattern-recognition and pro-inflammatory cytokine production. Plays an important role in regulating the circadian rhythms of plasma lipids, partially through regulating the rhythmic expression of MTTP. Required for proper development of GnRH neurons (gonadotropin-releasing hormone expressing neurons) that control the release of reproductive hormones from the pituitary gland. The chain is Leucine-rich repeat-containing G-protein coupled receptor 4 (Lgr4) from Mus musculus (Mouse).